Here is a 397-residue protein sequence, read N- to C-terminus: Phosphoglycerate kinase (397 aa).

Substrate contacts are provided by residues 25-27 (DLN), Arg-41, 64-67 (HLGR), Arg-118, and Arg-151. Residues Lys-202, Glu-324, and 350-353 (GGDT) each bind ATP.

Belongs to the phosphoglycerate kinase family. Monomer.

The protein resides in the cytoplasm. The enzyme catalyses (2R)-3-phosphoglycerate + ATP = (2R)-3-phospho-glyceroyl phosphate + ADP. The protein operates within carbohydrate degradation; glycolysis; pyruvate from D-glyceraldehyde 3-phosphate: step 2/5. The sequence is that of Phosphoglycerate kinase from Leptothrix cholodnii (strain ATCC 51168 / LMG 8142 / SP-6) (Leptothrix discophora (strain SP-6)).